Consider the following 373-residue polypeptide: Alpha-1,3-mannosyl-glycoprotein 4-beta-N-acetylglucosaminyltransferase-like protein MGAT4D (373 aa).

Topologically, residues methionine 1–asparagine 5 are cytoplasmic. The helical; Signal-anchor for type II membrane protein transmembrane segment at valine 6–serine 26 threads the bilayer. At arginine 27–tyrosine 373 the chain is on the lumenal side. 3 N-linked (GlcNAc...) asparagine glycosylation sites follow: asparagine 29, asparagine 54, and asparagine 144.

This sequence belongs to the glycosyltransferase 54 family. Isoform 2 self-associates; specifically in the endoplasmic reticulum prior to its translocation to the Golgi. Isoform 1 and isoform 2 interact with MGAT1, MGAT3 and MAN2A2; isoform 2 interacts specifically with MGAT1 in the Golgi. Isoform 2 is N-glycosylated; consisting of high-mannose and/or hybrid glycans. In terms of tissue distribution, isoform 1 and isoform 2 are specifically expressed in testis. Isoform 2 is expressed in spermatocytes but not in spermatids. Isoform 1 is expressed in spermatids.

The protein localises to the endoplasmic reticulum membrane. The protein resides in the endoplasmic reticulum-Golgi intermediate compartment membrane. It is found in the golgi apparatus membrane. May play a role in male spermatogenesis. In vitro acts as inhibitor of MGAT1 activity causing cell surface proteins to carry mainly high mannose N-glycans. The function is mediated by its lumenal domain and occurs specifically in the Golgi. A catalytic glucosyltransferase activity is not detected. May be involved in regulation of Sertoli-germ cell interactions during specific stages of spermatogenesis. The sequence is that of Alpha-1,3-mannosyl-glycoprotein 4-beta-N-acetylglucosaminyltransferase-like protein MGAT4D from Mus musculus (Mouse).